Consider the following 81-residue polypeptide: uncharacterized protein (81 aa).

To yeast YDL157C.

The protein resides in the mitochondrion. This is an uncharacterized protein from Schizosaccharomyces pombe (strain 972 / ATCC 24843) (Fission yeast).